A 504-amino-acid chain; its full sequence is Putative ribose/galactose/methyl galactoside import ATP-binding protein (504 aa).

2 ABC transporter domains span residues Ile5 to Leu242 and Thr252 to Glu497. An ATP-binding site is contributed by Gly37 to Ser44.

The protein belongs to the ABC transporter superfamily. Carbohydrate importer 2 (CUT2) (TC 3.A.1.2) family.

The protein localises to the cell inner membrane. It carries out the reaction D-ribose(out) + ATP + H2O = D-ribose(in) + ADP + phosphate + H(+). The enzyme catalyses D-galactose(out) + ATP + H2O = D-galactose(in) + ADP + phosphate + H(+). Functionally, part of an ABC transporter complex involved in carbohydrate import. Could be involved in ribose, galactose and/or methyl galactoside import. Responsible for energy coupling to the transport system. The sequence is that of Putative ribose/galactose/methyl galactoside import ATP-binding protein from Albidiferax ferrireducens (strain ATCC BAA-621 / DSM 15236 / T118) (Rhodoferax ferrireducens).